Reading from the N-terminus, the 160-residue chain is MKLEVLPLDQKTFSAYGDVIETQERDFFHINNGLVERYHDLAKVEVLEQDRTLISINRAQPAAMPIVVHELERHPLGTQAFVPMNGEAFVVIVALGDDKPELSTLRAFISNGRQGVNYHRNVWHHPLFAWQTVTDFLTVDRGGSDNCDVESIPTHELCFA.

It belongs to the ureidoglycolate lyase family. Homodimer. The cofactor is Ni(2+).

It catalyses the reaction (S)-ureidoglycolate = urea + glyoxylate. It functions in the pathway nitrogen metabolism; (S)-allantoin degradation. Its function is as follows. Catalyzes the catabolism of the allantoin degradation intermediate (S)-ureidoglycolate, generating urea and glyoxylate. Involved in the utilization of allantoin as nitrogen source. The polypeptide is Ureidoglycolate lyase (Salmonella enteritidis).